The primary structure comprises 187 residues: Nuclear transcription factor Y subunit C-8 (187 aa).

The disordered stretch occupies residues 163–187 (WPGAWTSVSGEEEEARGKKGGDDGN). Residues 177-187 (ARGKKGGDDGN) are compositionally biased toward basic and acidic residues.

It belongs to the NFYC/HAP5 subunit family. As to quaternary structure, heterotrimeric transcription factor composed of three components, NF-YA, NF-YB and NF-YC. NF-YB and NF-YC must interact and dimerize for NF-YA association and DNA binding. Expressed in flowers and siliques.

Its subcellular location is the nucleus. In terms of biological role, stimulates the transcription of various genes by recognizing and binding to a CCAAT motif in promoters. This is Nuclear transcription factor Y subunit C-8 (NFYC8) from Arabidopsis thaliana (Mouse-ear cress).